Reading from the N-terminus, the 56-residue chain is Prokaryotic ubiquitin-like protein UBact (56 aa).

The disordered stretch occupies residues 1 to 56; sequence MPERIVKPMPQDPVTKPGDEGPRTPNVPKPDTERLLERMRRVDPRQAQRYRQRSGE. Over residues 30-46 the composition is skewed to basic and acidic residues; the sequence is PDTERLLERMRRVDPRQ. Glu56 participates in a covalent cross-link: Isoglutamyl lysine isopeptide (Glu-Lys) (interchain with K-? in acceptor proteins).

The protein belongs to the ubiquitin-like protein UBact family.

May function as a protein modifier covalently attached to lysine residues of substrate proteins. This may serve to target the modified proteins for degradation by proteasomes. This Acetithermum autotrophicum protein is Prokaryotic ubiquitin-like protein UBact.